A 368-amino-acid polypeptide reads, in one-letter code: 2-aminoethylphosphonate--pyruvate transaminase (368 aa).

The residue at position 192 (Lys192) is an N6-(pyridoxal phosphate)lysine.

The protein belongs to the class-V pyridoxal-phosphate-dependent aminotransferase family. PhnW subfamily. As to quaternary structure, homodimer. It depends on pyridoxal 5'-phosphate as a cofactor.

It carries out the reaction (2-aminoethyl)phosphonate + pyruvate = phosphonoacetaldehyde + L-alanine. In terms of biological role, involved in phosphonate degradation. This Pseudomonas entomophila (strain L48) protein is 2-aminoethylphosphonate--pyruvate transaminase.